The sequence spans 300 residues: MEFPFDVDALFPERITVLDQHLRPPARRPGTTTPARVDLQQQIMTIIDELGKASAKAQHLPAPITSASRMQSNRHVMYILKDTSARPAGKGAIVGFLKVGYKKLFVLDDREAHNEVEPLCILDFYIHESLQRHGHGRELFQHMLQKERVEPHQLAIDRPSQKLLKFLNKHYNLETTVPQVNNFVIFEGFFAHQHPPARKLPPKRAEGDIKPYSSSDREFLKVAVEPPWPLNRAPRRATPPAHPPPRSSSLGNSPERGPLRPFVPEQELLRSLRLCPPHPTARLLLATDPGGSPAQRRRTR.

The N-acetyltransferase domain maps to 1-190; the sequence is MEFPFDVDAL…NNFVIFEGFF (190 aa). At Lys-56 the chain carries N6-acetyllysine; by autocatalysis. 124–137 contacts acetyl-CoA; that stretch reads FYIHESLQRHGHGR. Lys-146 is modified (N6-acetyllysine; by autocatalysis). Acetyl-CoA is bound at residue 160-169; sequence SQKLLKFLNK. Lys-210 and Lys-221 each carry N6-acetyllysine; by autocatalysis. 2 disordered regions span residues 229–263 and 280–300; these read PLNR…RPFV and TARL…RRTR. Phosphoserine is present on residues Ser-249 and Ser-253. Arg-282 carries the asymmetric dimethylarginine modification. Ser-292 is subject to Phosphoserine. Arg-300 is modified (omega-N-methylarginine).

This sequence belongs to the acetyltransferase ATAT1 family. As to quaternary structure, component of the BBSome complex. Interacts with AP2 alpha-adaptins, including AP2A2, but not with AP1 gamma-adaptin (AP1G1/AP1G2); this interaction is required for efficient alpha-tubulin acetylation, hence clathrin-coated pits are sites of microtubule acetylation. Post-translationally, autoacetylation strongly increases tubulin acetylation.

It localises to the cytoplasm. The protein localises to the membrane. Its subcellular location is the clathrin-coated pit. It is found in the cell junction. The protein resides in the focal adhesion. It localises to the cell projection. The protein localises to the axon. Its subcellular location is the cytoskeleton. It is found in the spindle. It catalyses the reaction L-lysyl-[alpha-tubulin] + acetyl-CoA = N(6)-acetyl-L-lysyl-[alpha-tubulin] + CoA + H(+). Specifically acetylates 'Lys-40' in alpha-tubulin on the lumenal side of microtubules. Promotes microtubule destabilization and accelerates microtubule dynamics; this activity may be independent of acetylation activity. Acetylates alpha-tubulin with a slow enzymatic rate, due to a catalytic site that is not optimized for acetyl transfer. Enters the microtubule through each end and diffuses quickly throughout the lumen of microtubules. Acetylates only long/old microtubules because of its slow acetylation rate since it does not have time to act on dynamically unstable microtubules before the enzyme is released. Required for normal sperm flagellar function. Promotes directional cell locomotion and chemotaxis, through AP2A2-dependent acetylation of alpha-tubulin at clathrin-coated pits that are concentrated at the leading edge of migrating cells. May facilitate primary cilium assembly. The chain is Alpha-tubulin N-acetyltransferase 1 from Sus scrofa (Pig).